The following is a 147-amino-acid chain: Protein-export protein SecB 2 (147 aa).

The protein belongs to the SecB family. As to quaternary structure, homotetramer, a dimer of dimers. One homotetramer interacts with 1 SecA dimer.

It is found in the cytoplasm. Functionally, one of the proteins required for the normal export of preproteins out of the cell cytoplasm. It is a molecular chaperone that binds to a subset of precursor proteins, maintaining them in a translocation-competent state. It also specifically binds to its receptor SecA. This Francisella tularensis subsp. holarctica (strain FTNF002-00 / FTA) protein is Protein-export protein SecB 2.